Reading from the N-terminus, the 758-residue chain is 5-methyltetrahydropteroyltriglutamate--homocysteine methyltransferase (758 aa).

Residues 17 to 20 (RELK) and K117 contribute to the 5-methyltetrahydropteroyltri-L-glutamate site. Residues 434–436 (IGS) and E487 each bind L-homocysteine. L-methionine is bound by residues 434 to 436 (IGS) and E487. 5-methyltetrahydropteroyltri-L-glutamate-binding positions include 518 to 519 (RC) and W564. Position 602 (D602) interacts with L-homocysteine. D602 is an L-methionine binding site. E608 contributes to the 5-methyltetrahydropteroyltri-L-glutamate binding site. H644, C646, and E668 together coordinate Zn(2+). H697 functions as the Proton donor in the catalytic mechanism. C729 is a binding site for Zn(2+).

It belongs to the vitamin-B12 independent methionine synthase family. It depends on Zn(2+) as a cofactor.

The enzyme catalyses 5-methyltetrahydropteroyltri-L-glutamate + L-homocysteine = tetrahydropteroyltri-L-glutamate + L-methionine. It participates in amino-acid biosynthesis; L-methionine biosynthesis via de novo pathway; L-methionine from L-homocysteine (MetE route): step 1/1. Functionally, catalyzes the transfer of a methyl group from 5-methyltetrahydrofolate to homocysteine resulting in methionine formation. This is 5-methyltetrahydropteroyltriglutamate--homocysteine methyltransferase from Photorhabdus laumondii subsp. laumondii (strain DSM 15139 / CIP 105565 / TT01) (Photorhabdus luminescens subsp. laumondii).